A 418-amino-acid chain; its full sequence is Queuine tRNA-ribosyltransferase accessory subunit 2 (418 aa).

Zn(2+) is bound by residues Cys-325, Cys-327, Cys-330, and His-356.

This sequence belongs to the queuine tRNA-ribosyltransferase family. QTRT2 subfamily. In terms of assembly, heterodimer of a catalytic subunit and an accessory subunit. Requires Zn(2+) as cofactor.

The protein resides in the cytoplasm. Functionally, non-catalytic subunit of the queuine tRNA-ribosyltransferase (TGT) that catalyzes the base-exchange of a guanine (G) residue with queuine (Q) at position 34 (anticodon wobble position) in tRNAs with GU(N) anticodons (tRNA-Asp, -Asn, -His and -Tyr), resulting in the hypermodified nucleoside queuosine (7-(((4,5-cis-dihydroxy-2-cyclopenten-1-yl)amino)methyl)-7-deazaguanosine). The chain is Queuine tRNA-ribosyltransferase accessory subunit 2 from Drosophila melanogaster (Fruit fly).